A 312-amino-acid chain; its full sequence is Borealin-2 (312 aa).

Residues 1–10 (MPPRKAPAKR) show a composition bias toward basic residues. A disordered region spans residues 1–26 (MPPRKAPAKRRSTDSGVERDRGALSQ). The span at 11-26 (RSTDSGVERDRGALSQ) shows a compositional bias: basic and acidic residues.

It belongs to the borealin family. In terms of assembly, component of the CPC complex.

It is found in the nucleus. The protein localises to the chromosome. The protein resides in the centromere. Component of the chromosomal passenger complex (CPC), a complex that acts as a key regulator of mitosis. The CPC complex has essential functions at the centromere in ensuring correct chromosome alignment and segregation and is required for chromatin-induced microtubule stabilization and spindle assembly. The protein is Borealin-2 of Gallus gallus (Chicken).